We begin with the raw amino-acid sequence, 260 residues long: Hydroxyethylthiazole kinase 1 (260 aa).

Met39 contributes to the substrate binding site. Residues Arg115 and Thr160 each coordinate ATP. Substrate is bound at residue Gly187.

Belongs to the Thz kinase family. Mg(2+) is required as a cofactor.

The catalysed reaction is 5-(2-hydroxyethyl)-4-methylthiazole + ATP = 4-methyl-5-(2-phosphooxyethyl)-thiazole + ADP + H(+). Its pathway is cofactor biosynthesis; thiamine diphosphate biosynthesis; 4-methyl-5-(2-phosphoethyl)-thiazole from 5-(2-hydroxyethyl)-4-methylthiazole: step 1/1. In terms of biological role, catalyzes the phosphorylation of the hydroxyl group of 4-methyl-5-beta-hydroxyethylthiazole (THZ). This is Hydroxyethylthiazole kinase 1 from Streptococcus pneumoniae (strain 70585).